We begin with the raw amino-acid sequence, 2116 residues long: MEKLLDEVLAPGGPYNLTVGSWVRDHVRSIVEGAWEVRDVVTAAQKRAIVAVIPRPVFTQMQVSDHPALHAISRYTRRHWIEWGPKEALHVLIDPSPGLLREVARVERRWVALCLHRTARKLATALAETASEAWHADYVCALRGAPSGPFYVHPEDVPHGGRAVADRCLLYYTPMQMCELMRTIDATLLVAVDLWPVALAAHVGDDWDDLGIAWHLDHDGGCPADCRGAGAGPTPGYTRPCTTRIYQVLPDTAHPGRLYRCGPRLWTRDCAVAELSWEVAQHCGHQARVRAVRCTLPIRHVRSLQPSARVRLPDLVHLAEVGWWRWFSLPRPVFQRMLSYCKTLSPDAYYSERVFKFKNALSHSITLAGNVLQEGWKGTCAEEDALCAYVAFRAWQSNARLAGIMKSAKRCAADSLSVAGWLDTIWDAIKRFFGSVPLAERMEEWEQDAAVAAFDRGPLEDGGRHLDTVQPPKSPPRPEIAATWIVHAASADRHCACAPRCDVPRERPSAPAGPPDDEALIPPWLFAERRALRCREWDFEALRARADTAAAPAPLAPRPARYPTVLYRHPAHHGPWLTLDEPGGADAALVLCDPLGQPLRGPERHYAAGAHMCAQARGLQAFVRVVPPPERPWADGGARAWAKFFRGCAWAQRLLGEPAVMHLPYTDGDVPKLIALALRTLAQQGAALALSVRDLPRGTAFEANAVTAAVRAGPGQLAATSPPPGDPPPPRRARRSQRHSDARGTPPPAPVRDPPRPQPSPPAPPRVGDPVPPTTAEPADRARHAELEVVYEPSGPPTSTKADPDSDIVESYARAAGPVHLRVRDIMDPPPGCKVVVNAANEGLLAGSGVCGAIFANATAALAADCRRLAPCPIGEAVATPGHGCGYTHIIHAVAPRRPRDPAALEEGEALLERAYRSIVALAAARRWARVACPLLGAGVYGWSAAESLRAALAATRAEPAERVSLHICHPDRATLTHASVLVGAGLAARRVSPPPTEPLASCPAGDPGRPAQRSASPPATPLGDATAPEPRGCQGCELCRYTRVTNDRAYVNLWLERDRGATSWAMRIPEVVVYGPEHLATHFPLNHYSVLKPAEVRPPRGMCGSDMWRCRGWQGMPQVRCTPSNAHAALCRTGVPPRVSTRGGELDPNTCWLRAAANVAQAARACGAYTSAGCPKCAYGRALSEARTHEDFAALSQWWSASHADASPDGTGDPLDPLMETVGCACSRVWVGSEHEAPPDHLLVSLHRAPNGPWGVVLEVRARPEGGNPTGHFVCAVGGGPRRVSDRPHLWLAVPLSRGGGTCAATDEGLAQAYYDDLEVRRLGDDAMARAALASIQRPRKGPYNIRVWNMAAGAGKTTRILAAFTREDLYVCPTNALLHEIQAKLRARDIDIKNAATYERALTKPLAAYRRIYIDEAFTLGGEYCAFVASQTTAEVICVGDRDQCGPHYANNCRTPVPDRWPTGRSRHTWRFPDCWAARLRAGLDYDIEGERTGTFACNLWDGRQVDLHLAFSRETVRRLHEAGIRAYTVREAQGMSVGTACIHVGRDGTDVALALTRDLAIVSLTRASDALYLHELEDGLLRAAGLSAFLDAGALAELKEVPAGIDRVVAVEQAPPPLPPADGIPEAQDVPPFCPRTLEELVFGRAGHPHYADLNRVTEGEREVRYMRISRHLLNKNHTEMPGTERVLSAVCAVRRYRAGEDGSTLRTAVARQHPRPFRQIPPPRVTAGVAQEWRMTYLRERIDLTDVYTQMGVAARELTDRYTRRYPEIFAGMCTAQSLSVPAFLKATLKCVDAALGPRDTEDCHAAQGKAGLEIRAWAKEWVQVMSPHFRAIQKIIMRALRPQFLVAAGHTEPEVDAWWQAHYTTNAIEVDFTEFDMNQTLATRDVELEISAALLGLPCAEDYRALRAGSYCTLRELGSTETGCERTSGEPATLLHNTTVAMCMAMRMVPKGVRWAGIFQGDDMVIFLPEGARNAALKWTPAEVGLFGFHIPVKHVSTPTPSFCGHVGTAAGLFHDVMHQAIKVLCRRFDPDVLEEQQVALLDRLRGVYAALPDTVAANAAYYDYSAERVLAIVRELTAYARGRGLDHPATIGALEEIQTPYARANLHDAD.

The segment at 36–49 (EVRDVVTAAQKRAI) is required for efficient proteolysis and P150-P90 interaction. The Alphavirus-like MT domain maps to 57-247 (VFTQMQVSDH…TRPCTTRIYQ (191 aa)). The tract at residues 715–779 (GQLAATSPPP…PVPPTTAEPA (65 aa)) is disordered. 2 stretches are compositionally biased toward pro residues: residues 721-730 (SPPPGDPPPP) and 745-775 (TPPP…PPTT). 3 short sequence motifs (pxxPxR; class II SH3-binding) span residues 727–732 (PPPPRR), 747–752 (PPAPVR), and 761–766 (PPAPPR). A Macro domain is found at 806–985 (SDIVESYARA…LTHASVLVGA (180 aa)). Residues 992 to 1031 (VSPPPTEPLASCPAGDPGRPAQRSASPPATPLGDATAPEP) form a disordered region. The region spanning 1000 to 1301 (LASCPAGDPG…WLAVPLSRGG (302 aa)) is the Peptidase C27 domain. The active-site For cysteine protease activity is cysteine 1152. The interaction with host CALM1 stretch occupies residues 1152–1183 (CWLRAAANVAQAARACGAYTSAGCPKCAYGRA). Cysteine 1175, cysteine 1178, cysteine 1227, and histidine 1273 together coordinate Zn(2+). The interval 1193-1228 (FAALSQWWSASHADASPDGTGDPLDPLMETVGCACS) is EF-hand-like. The active-site For cysteine protease activity is histidine 1273. The (+)RNA virus helicase ATP-binding domain occupies 1320 to 1468 (EVRRLGDDAM…VPDRWPTGRS (149 aa)). Position 1352–1359 (1352–1359 (MAAGAGKT)) interacts with a ribonucleoside 5'-triphosphate. The 141-residue stretch at 1469–1609 (RHTWRFPDCW…ELKEVPAGID (141 aa)) folds into the (+)RNA virus helicase C-terminal domain. Positions 1700–1900 (YRAGEDGSTL…VELEISAALL (201 aa)) are involved in P150-P90 interaction. Residues 1870–1981 (TNAIEVDFTE…FLPEGARNAA (112 aa)) form the RdRp catalytic domain. The short motif at 1902–1906 (LPCAE) is the Human RB1 binding element.

As to quaternary structure, interacts with RNA-directed RNA polymerase p90. Interacts with host CALM1; this interaction is necessary for the protease activity and viral infectivity. Interacts with host C1QBP. Interacts with the capsid protein. In terms of assembly, interacts with human RB1/retinoblastoma protein. Interacts with protease/methyltransferase p150. Zn(2+) is required as a cofactor. In terms of processing, specific enzymatic cleavage by its own cysteine protease yield mature proteins p150 and p90.

It is found in the host membrane. It localises to the host cytoplasm. The protein resides in the host perinuclear region. The enzyme catalyses RNA(n) + a ribonucleoside 5'-triphosphate = RNA(n+1) + diphosphate. It catalyses the reaction a ribonucleoside 5'-triphosphate + H2O = a ribonucleoside 5'-diphosphate + phosphate + H(+). It carries out the reaction ATP + H2O = ADP + phosphate + H(+). Its function is as follows. Probable principal replicase for the negative-strand DNA, which replicates the 40S (+) genomic RNA into (-) antigenomic RNA. It cannot replicate the (-) into (+) until cleaved into p150 and p90 mature proteins. Functionally, protease that cleaves the precursor polyprotein into two mature products. Together with RNA-directed RNA polymerase p90, replicates the 40S genomic and antigenomic RNA by recognizing replications specific signals. The heterodimer P150/p90 is probably the principal replicase for positive-strand genomic RNA and the 24S subgenomic RNA, which codes for structural proteins. Responsible for the mRNA-capping of the viral mRNAs. This function is necessary since all viral RNAs are synthesized in the cytoplasm, and host capping enzymes are restricted to the nucleus. Forms fibers late in the infection that may be involved in cell-to-cell spread of the virus RNA in the absence of virus particle formation. Together with protease/methyltransferase p150, replicates the 40S genomic and antigenomic RNA by recognizing replications specific signals. The heterodimer P150/p90 is probably the principal replicase for positive-strand genomic RNA and the 24S subgenomic RNA, which codes for structural proteins. A helicase activity is probably also present. The polypeptide is Non-structural polyprotein p200 (Rubella virus (strain M33) (RUBV)).